Consider the following 36-residue polypeptide: Light-harvesting protein B-1015 gamma chain (36 aa).

Its function is as follows. One of the components of the bacteriochlorophyll-protein complex in the chromatophore membrane. This chain is Light-harvesting protein B-1015 gamma chain, found in Blastochloris viridis (Rhodopseudomonas viridis).